Consider the following 319-residue polypeptide: Methionyl-tRNA formyltransferase (319 aa).

116–119 is a (6S)-5,6,7,8-tetrahydrofolate binding site; that stretch reads SLLP.

This sequence belongs to the Fmt family.

It catalyses the reaction L-methionyl-tRNA(fMet) + (6R)-10-formyltetrahydrofolate = N-formyl-L-methionyl-tRNA(fMet) + (6S)-5,6,7,8-tetrahydrofolate + H(+). Attaches a formyl group to the free amino group of methionyl-tRNA(fMet). The formyl group appears to play a dual role in the initiator identity of N-formylmethionyl-tRNA by promoting its recognition by IF2 and preventing the misappropriation of this tRNA by the elongation apparatus. The chain is Methionyl-tRNA formyltransferase from Treponema pallidum (strain Nichols).